The primary structure comprises 418 residues: Actin-related protein 3-B (418 aa).

It belongs to the actin family. ARP3 subfamily. Component of the Arp2/3 complex composed of actr2/arp2, actr3/arp3, arpc1 (arpc1a or arpc1b), arpc2, arpc3, arpc4 and arpc5.

It localises to the cytoplasm. It is found in the cytoskeleton. The protein localises to the cell projection. Its subcellular location is the nucleus. Functionally, ATP-binding component of the Arp2/3 complex, a multiprotein complex that mediates actin polymerization upon stimulation by nucleation-promoting factor (NPF). The Arp2/3 complex mediates the formation of branched actin networks in the cytoplasm, providing the force for cell motility. Seems to contact the pointed end of the daughter actin filament. In addition to its role in the cytoplasmic cytoskeleton, the Arp2/3 complex also promotes actin polymerization in the nucleus, thereby regulating gene transcription and repair of damaged DNA. The Arp2/3 complex promotes homologous recombination (HR) repair in response to DNA damage by promoting nuclear actin polymerization, leading to drive motility of double-strand breaks (DSBs). This Xenopus laevis (African clawed frog) protein is Actin-related protein 3-B (actr3-b).